We begin with the raw amino-acid sequence, 117 residues long: MRDWRWMLLVLALLLGWLQYRFWFGPGNSGEVMMLEAQVANQERDNEGLQQRNDALAAEVKDLKEGQSAIEERARSELGMIKPGEKFYRVVEDAPVHPAQPAAGVSAQVGDHPADVP.

At 1–6 the chain is on the cytoplasmic side; it reads MRDWRW. A helical transmembrane segment spans residues 7 to 24; that stretch reads MLLVLALLLGWLQYRFWF. Over 25-117 the chain is Periplasmic; that stretch reads GPGNSGEVMM…QVGDHPADVP (93 aa). Residues 29 to 69 adopt a coiled-coil conformation; sequence SGEVMMLEAQVANQERDNEGLQQRNDALAAEVKDLKEGQSA.

It belongs to the FtsB family. In terms of assembly, part of a complex composed of FtsB, FtsL and FtsQ.

Its subcellular location is the cell inner membrane. In terms of biological role, essential cell division protein. May link together the upstream cell division proteins, which are predominantly cytoplasmic, with the downstream cell division proteins, which are predominantly periplasmic. In Stenotrophomonas maltophilia (strain K279a), this protein is Cell division protein FtsB.